A 156-amino-acid polypeptide reads, in one-letter code: Small ribosomal subunit protein uS7 (156 aa).

It belongs to the universal ribosomal protein uS7 family. As to quaternary structure, part of the 30S ribosomal subunit. Contacts proteins S9 and S11.

Its function is as follows. One of the primary rRNA binding proteins, it binds directly to 16S rRNA where it nucleates assembly of the head domain of the 30S subunit. Is located at the subunit interface close to the decoding center, probably blocks exit of the E-site tRNA. This is Small ribosomal subunit protein uS7 from Microcystis aeruginosa (strain NIES-843 / IAM M-2473).